We begin with the raw amino-acid sequence, 796 residues long: Molybdenum cofactor sulfurase (796 aa).

An N6-(pyridoxal phosphate)lysine modification is found at Lys-246. Cys-418 is a catalytic residue. The MOSC domain occupies 650 to 796 (LRLLRQSSQR…LTCGDVVVVT (147 aa)). Position 752 is a phosphoserine (Ser-752).

Belongs to the class-V pyridoxal-phosphate-dependent aminotransferase family. MOCOS subfamily. The cofactor is pyridoxal 5'-phosphate.

It carries out the reaction Mo-molybdopterin + L-cysteine + AH2 = thio-Mo-molybdopterin + L-alanine + A + H2O. Sulfurates the molybdenum cofactor. Sulfation of molybdenum is essential for xanthine dehydrogenase (XDH) and aldehyde oxidase (ADO) enzymes in which molybdenum cofactor is liganded by 1 oxygen and 1 sulfur atom in active form. The sequence is that of Molybdenum cofactor sulfurase from Drosophila persimilis (Fruit fly).